The chain runs to 343 residues: 2,3,4,5-tetrahydropyridine-2,6-dicarboxylate N-succinyltransferase (343 aa).

Glutamate 204 is a Mg(2+) binding site. Glutamate 220 acts as the Acyl-anhydride intermediate in catalysis. Succinyl-CoA contacts are provided by residues arginine 222, glycine 237, serine 240, alanine 263, 278 to 279 (ES), glycine 286, lysine 303, and 316 to 319 (RRNS).

It belongs to the type 2 tetrahydrodipicolinate N-succinyltransferase family. As to quaternary structure, homotrimer.

It is found in the cytoplasm. It carries out the reaction (S)-2,3,4,5-tetrahydrodipicolinate + succinyl-CoA + H2O = (S)-2-succinylamino-6-oxoheptanedioate + CoA. It participates in amino-acid biosynthesis; L-lysine biosynthesis via DAP pathway; LL-2,6-diaminopimelate from (S)-tetrahydrodipicolinate (succinylase route): step 1/3. Its function is as follows. Catalyzes the conversion of the cyclic tetrahydrodipicolinate (THDP) into the acyclic N-succinyl-L-2-amino-6-oxopimelate using succinyl-CoA. This Vibrio cholerae serotype O1 (strain ATCC 39315 / El Tor Inaba N16961) protein is 2,3,4,5-tetrahydropyridine-2,6-dicarboxylate N-succinyltransferase.